Here is a 531-residue protein sequence, read N- to C-terminus: CTP synthase (531 aa).

The interval 1 to 265 (MAKYIFITGG…DRIITERLNL (265 aa)) is amidoligase domain. Residue serine 13 coordinates CTP. Serine 13 is a UTP binding site. 14-19 (SLGKGI) lines the ATP pocket. L-glutamine is bound at residue tyrosine 54. Residue aspartate 71 coordinates ATP. The Mg(2+) site is built by aspartate 71 and glutamate 139. Residues 146 to 148 (DIE), 186 to 191 (KTKPTQ), and lysine 222 contribute to the CTP site. UTP is bound by residues 186-191 (KTKPTQ) and lysine 222. The Glutamine amidotransferase type-1 domain maps to 290-529 (NVALVGKYVE…IRACLEYKRK (240 aa)). Glycine 349 serves as a coordination point for L-glutamine. The active-site Nucleophile; for glutamine hydrolysis is cysteine 376. Residues 377–380 (LGMQ), glutamate 400, and arginine 457 contribute to the L-glutamine site. Residues histidine 502 and glutamate 504 contribute to the active site.

This sequence belongs to the CTP synthase family. As to quaternary structure, homotetramer.

The enzyme catalyses UTP + L-glutamine + ATP + H2O = CTP + L-glutamate + ADP + phosphate + 2 H(+). It carries out the reaction L-glutamine + H2O = L-glutamate + NH4(+). The catalysed reaction is UTP + NH4(+) + ATP = CTP + ADP + phosphate + 2 H(+). Its pathway is pyrimidine metabolism; CTP biosynthesis via de novo pathway; CTP from UDP: step 2/2. With respect to regulation, allosterically activated by GTP, when glutamine is the substrate; GTP has no effect on the reaction when ammonia is the substrate. The allosteric effector GTP functions by stabilizing the protein conformation that binds the tetrahedral intermediate(s) formed during glutamine hydrolysis. Inhibited by the product CTP, via allosteric rather than competitive inhibition. In terms of biological role, catalyzes the ATP-dependent amination of UTP to CTP with either L-glutamine or ammonia as the source of nitrogen. Regulates intracellular CTP levels through interactions with the four ribonucleotide triphosphates. The protein is CTP synthase of Aquifex aeolicus (strain VF5).